A 557-amino-acid polypeptide reads, in one-letter code: Hdr-like menaquinol oxidoreductase iron-sulfur subunit (557 aa).

4Fe-4S ferredoxin-type domains lie at 86-115 (RAFK…GDPK) and 155-184 (KEWY…AEVV). [4Fe-4S] cluster contacts are provided by cysteine 95, cysteine 98, cysteine 101, cysteine 105, cysteine 164, cysteine 167, cysteine 170, and cysteine 174.

Requires [4Fe-4S] cluster as cofactor.

Its subcellular location is the membrane. Functionally, has menaquinol-oxidizing activity. The HmeC and HmeD subunits may together mediate electron transfer from menaquinol to an unidentified electron acceptor on the cytoplasmic side of the membrane. In Archaeoglobus profundus (strain DSM 5631 / JCM 9629 / NBRC 100127 / Av18), this protein is Hdr-like menaquinol oxidoreductase iron-sulfur subunit (hmeD).